The primary structure comprises 410 residues: Ribulose bisphosphate carboxylase large chain (410 aa).

Residues Asn100 and Thr150 each coordinate substrate. Catalysis depends on Lys152, which acts as the Proton acceptor. Residue Lys154 coordinates substrate. The Mg(2+) site is built by Lys178, Asp180, and Glu181. Lys178 carries the N6-carboxylysine modification. The active-site Proton acceptor is the His271. Substrate-binding residues include Arg272, His304, and Ser356.

Belongs to the RuBisCO large chain family. Type I subfamily. Heterohexadecamer of 8 large chains and 8 small chains; disulfide-linked. The disulfide link is formed within the large subunit homodimers. Mg(2+) serves as cofactor. The disulfide bond which can form in the large chain dimeric partners within the hexadecamer appears to be associated with oxidative stress and protein turnover.

It localises to the plastid. It is found in the chloroplast. The enzyme catalyses 2 (2R)-3-phosphoglycerate + 2 H(+) = D-ribulose 1,5-bisphosphate + CO2 + H2O. It catalyses the reaction D-ribulose 1,5-bisphosphate + O2 = 2-phosphoglycolate + (2R)-3-phosphoglycerate + 2 H(+). In terms of biological role, ruBisCO catalyzes two reactions: the carboxylation of D-ribulose 1,5-bisphosphate, the primary event in carbon dioxide fixation, as well as the oxidative fragmentation of the pentose substrate in the photorespiration process. Both reactions occur simultaneously and in competition at the same active site. The polypeptide is Ribulose bisphosphate carboxylase large chain (rbcL) (Gleichenia japonica (Urajiro)).